Reading from the N-terminus, the 227-residue chain is AN1-type zinc finger protein 3 (227 aa).

The A20-type zinc finger occupies 12 to 44 (PSLPPRCPCGFWGSSKTMNLCSKCFADFQKKQP). The Zn(2+) site is built by C18, C20, C32, and C35. Disordered stretches follow at residues 41–99 (KKQP…TEEC) and 113–151 (PTKR…RSKQ). Composition is skewed to low complexity over residues 49 to 59 (TPSTSNSQSDL) and 66 to 77 (SDNNNTSVTTPT). 2 stretches are compositionally biased toward polar residues: residues 78 to 96 (LSPS…SPST) and 113 to 127 (PTKR…SENE). Positions 135 to 148 (RLVENPERPEESGR) are enriched in basic and acidic residues. An AN1-type zinc finger spans residues 151 to 200 (QKSRRRCFQCQTKLELVQQELGSCRCGYVFCMLHRLPEQHDCTFDHMGRG). Residues C157, C160, C174, C176, C181, H184, H190, and C192 each coordinate Zn(2+).

In terms of tissue distribution, expressed in testis.

In Mus musculus (Mouse), this protein is AN1-type zinc finger protein 3 (Zfand3).